A 383-amino-acid polypeptide reads, in one-letter code: ATP phosphoribosyltransferase regulatory subunit (383 aa).

This sequence belongs to the class-II aminoacyl-tRNA synthetase family. HisZ subfamily. In terms of assembly, heteromultimer composed of HisG and HisZ subunits.

It localises to the cytoplasm. It functions in the pathway amino-acid biosynthesis; L-histidine biosynthesis; L-histidine from 5-phospho-alpha-D-ribose 1-diphosphate: step 1/9. Its function is as follows. Required for the first step of histidine biosynthesis. May allow the feedback regulation of ATP phosphoribosyltransferase activity by histidine. This is ATP phosphoribosyltransferase regulatory subunit from Desulfitobacterium hafniense (strain DSM 10664 / DCB-2).